The chain runs to 457 residues: ATP synthase subunit beta (457 aa).

Position 150–157 (150–157 (GGAGVGKT)) interacts with ATP.

This sequence belongs to the ATPase alpha/beta chains family. In terms of assembly, F-type ATPases have 2 components, CF(1) - the catalytic core - and CF(0) - the membrane proton channel. CF(1) has five subunits: alpha(3), beta(3), gamma(1), delta(1), epsilon(1). CF(0) has three main subunits: a(1), b(2) and c(9-12). The alpha and beta chains form an alternating ring which encloses part of the gamma chain. CF(1) is attached to CF(0) by a central stalk formed by the gamma and epsilon chains, while a peripheral stalk is formed by the delta and b chains.

It is found in the cell membrane. It catalyses the reaction ATP + H2O + 4 H(+)(in) = ADP + phosphate + 5 H(+)(out). In terms of biological role, produces ATP from ADP in the presence of a proton gradient across the membrane. The catalytic sites are hosted primarily by the beta subunits. This is ATP synthase subunit beta from Baumannia cicadellinicola subsp. Homalodisca coagulata.